The following is a 483-amino-acid chain: Glutamyl-tRNA(Gln) amidotransferase subunit A (483 aa).

Catalysis depends on charge relay system residues K75 and S150. Residue S174 is the Acyl-ester intermediate of the active site.

It belongs to the amidase family. GatA subfamily. As to quaternary structure, heterotrimer of A, B and C subunits.

The enzyme catalyses L-glutamyl-tRNA(Gln) + L-glutamine + ATP + H2O = L-glutaminyl-tRNA(Gln) + L-glutamate + ADP + phosphate + H(+). Its function is as follows. Allows the formation of correctly charged Gln-tRNA(Gln) through the transamidation of misacylated Glu-tRNA(Gln) in organisms which lack glutaminyl-tRNA synthetase. The reaction takes place in the presence of glutamine and ATP through an activated gamma-phospho-Glu-tRNA(Gln). This Deinococcus geothermalis (strain DSM 11300 / CIP 105573 / AG-3a) protein is Glutamyl-tRNA(Gln) amidotransferase subunit A.